Consider the following 375-residue polypeptide: tRNA-specific 2-thiouridylase MnmA (375 aa).

ATP is bound by residues 16–23 (GMSGGVDS) and M42. Residues 102–104 (NPD) form an interaction with target base in tRNA region. Catalysis depends on C107, which acts as the Nucleophile. Cysteines 107 and 203 form a disulfide. Residue G131 coordinates ATP. Residues 153 to 155 (KDQ) are interaction with tRNA. C203 functions as the Cysteine persulfide intermediate in the catalytic mechanism. Residues 315-316 (RY) are interaction with tRNA.

It belongs to the MnmA/TRMU family.

The protein localises to the cytoplasm. The enzyme catalyses S-sulfanyl-L-cysteinyl-[protein] + uridine(34) in tRNA + AH2 + ATP = 2-thiouridine(34) in tRNA + L-cysteinyl-[protein] + A + AMP + diphosphate + H(+). Functionally, catalyzes the 2-thiolation of uridine at the wobble position (U34) of tRNA, leading to the formation of s(2)U34. The protein is tRNA-specific 2-thiouridylase MnmA of Pseudomonas aeruginosa (strain LESB58).